Reading from the N-terminus, the 182-residue chain is Large ribosomal subunit protein bL25 (182 aa).

The protein belongs to the bacterial ribosomal protein bL25 family. CTC subfamily. As to quaternary structure, part of the 50S ribosomal subunit; part of the 5S rRNA/L5/L18/L25 subcomplex. Contacts the 5S rRNA. Binds to the 5S rRNA independently of L5 and L18.

Functionally, this is one of the proteins that binds to the 5S RNA in the ribosome where it forms part of the central protuberance. This chain is Large ribosomal subunit protein bL25, found in Borreliella burgdorferi (strain ATCC 35210 / DSM 4680 / CIP 102532 / B31) (Borrelia burgdorferi).